Here is a 131-residue protein sequence, read N- to C-terminus: MYKIVPDTNFLIYVFKHKINFDYEIERALNTKFEIVILSPIKEELERLLKSRDLKGKEKLAVNLALAKIKNYKLVDYTANYADEAILNYAKENENVIVATNDKELKEKLMENNIPVMVVRQKKYFEIFGMV.

The 103-residue stretch at 4–106 (IVPDTNFLIY…IVATNDKELK (103 aa)) folds into the PINc domain. Mg(2+)-binding residues include aspartate 7 and aspartate 102.

It belongs to the PINc/VapC protein family. The cofactor is Mg(2+).

Functionally, toxic component of a type II toxin-antitoxin (TA) system. An RNase. Its cognate antitoxin is VapB4. The polypeptide is Ribonuclease VapC4 (Methanocaldococcus jannaschii (strain ATCC 43067 / DSM 2661 / JAL-1 / JCM 10045 / NBRC 100440) (Methanococcus jannaschii)).